Consider the following 857-residue polypeptide: RNA-directed RNA polymerase 2a (857 aa).

The 114-residue stretch at 511 to 624 (KYCLEIDLSK…FSLLPPVGDS (114 aa)) folds into the RdRp catalytic domain. Residues 780–789 (IERRCDDKRR) show a composition bias toward basic and acidic residues. The disordered stretch occupies residues 780-857 (IERRCDDKRR…PCERGGVTRA (78 aa)). Composition is skewed to polar residues over residues 804–816 (KVSQ…TRSQ) and 824–840 (FESQ…SGWS).

It belongs to the ssRNA positive-strand viruses RNA-directed RNA polymerase family. Interacts with replication protein 1a.

It catalyses the reaction RNA(n) + a ribonucleoside 5'-triphosphate = RNA(n+1) + diphosphate. RNA-dependent RNA polymerase which replicates the viral genome composed of 3 RNA segments, RNA1, RNA2 and RNA3. The sequence is that of RNA-directed RNA polymerase 2a from Cucumber mosaic virus (strain MB-8) (CMV).